We begin with the raw amino-acid sequence, 332 residues long: Ephrin-B2a (332 aa).

Residues 1–24 (MGDSLWRYYFGVLVIACKVNLSRA) form the signal peptide. N-linked (GlcNAc...) asparagine glycans are attached at residues N20 and N33. An Ephrin RBD domain is found at 25–161 (LILDSIYWNT…TKSMKIIMKV (137 aa)). Topologically, residues 25 to 225 (LILDSIYWNT…VIGSEVALFA (201 aa)) are extracellular. Disulfide bonds link C59/C98 and C86/C150. A glycan (N-linked (GlcNAc...) asparagine) is linked at N136. Residues 162–212 (GQNPSDPISPKDYPTSYPPKHPDLGGKDSKSNEVLKPDASPHGEDKGDGNK) form a disordered region. A compositionally biased stretch (basic and acidic residues) spans 181-210 (KHPDLGGKDSKSNEVLKPDASPHGEDKGDG). An N-linked (GlcNAc...) asparagine glycan is attached at N211. Residues 226 to 246 (CIASASVIVIIIIIMLVFLLL) form a helical membrane-spanning segment. At 247 to 332 (KYRRRHRKHS…QSPANIYYKV (86 aa)) the chain is on the cytoplasmic side. The tract at residues 255 to 285 (HSPQHATTLSLSTLATPKRGGSGGNNNGSEP) is disordered. The span at 260–270 (ATTLSLSTLAT) shows a compositional bias: low complexity. Residues 330 to 332 (YKV) carry the PDZ-binding motif.

The protein belongs to the ephrin family. In terms of assembly, binds to the receptor tyrosine kinase ephb4. In terms of processing, inducible phosphorylation of tyrosine residues in the cytoplasmic domain.

It is found in the cell membrane. In terms of biological role, cell surface transmembrane ligand for Eph receptors, a family of receptor tyrosine kinases which are crucial for migration, repulsion and adhesion during neuronal, vascular and epithelial development. Binds promiscuously Eph receptors residing on adjacent cells, leading to contact-dependent bidirectional signaling into neighboring cells. The signaling pathway downstream of the receptor is referred to as forward signaling while the signaling pathway downstream of the ephrin ligand is referred to as reverse signaling. Together with ephb4 may play a central role in heart morphogenesis and angiogenesis through regulation of cell adhesion and cell migration. The polypeptide is Ephrin-B2a (efnb2a) (Danio rerio (Zebrafish)).